We begin with the raw amino-acid sequence, 659 residues long: ATP-binding cassette sub-family D member 3 (659 aa).

Residues 2–61 (AAFSKYLTARNSSLAGAAFLLFCLLHKRRRALGLHGKKSGKPPLQNNEKEGKKERAVVDK) are interaction with PEX19. N-linked (GlcNAc...) asparagine glycosylation is present at Asn-12. N6-acetyllysine is present on Lys-61. Residues 84-104 (GYLILIAVMLVSRTYCDVWMI) traverse the membrane as a helical segment. An ABC transmembrane type-1 domain is found at 85–372 (YLILIAVMLV…MLLRMSQALG (288 aa)). An N-linked (GlcNAc...) asparagine glycan is attached at Asn-106. A helical transmembrane segment spans residues 126-146 (LFNFIAAMPLISLVNNFLKYG). N-linked (GlcNAc...) asparagine glycosylation occurs at Asn-206. The chain crosses the membrane as a helical span at residues 224–244 (AIGAQGPASMMAYLLVSGLFL). The residue at position 260 (Lys-260) is an N6-acetyllysine. Residues 313 to 333 (MGFIDSIIAKYIATVVGYLVV) traverse the membrane as a helical segment. An N6-acetyllysine modification is found at Lys-399. Ser-424 carries the post-translational modification Phosphoserine. Residues 434-659 (INADNIIKFD…ITEDTVEFGS (226 aa)) enclose the ABC transporter domain. 473-480 (GPNGCGKS) serves as a coordination point for ATP. At Lys-533 the chain carries N6-acetyllysine. At Ser-659 the chain carries Phosphoserine.

Belongs to the ABC transporter superfamily. ABCD family. Peroxisomal fatty acyl CoA transporter (TC 3.A.1.203) subfamily. In terms of assembly, homodimers. Can form heterodimers with ABCD1 and ABCD2. Dimerization is necessary to form an active transporter. Interacts with PEX19; mediates the targeting of ABCD3 to peroxisomes. Ubiquitinated by PEX2 during pexophagy in response to starvation, leading to its degradation.

The protein localises to the peroxisome membrane. The catalysed reaction is a very long-chain fatty acyl-CoA + H2O = a very long-chain fatty acid + CoA + H(+). It carries out the reaction a very long-chain fatty acid(in) + ATP + H2O = a very long-chain fatty acid(out) + ADP + phosphate + H(+). It catalyses the reaction a long-chain fatty acyl-CoA + H2O = a long-chain fatty acid + CoA + H(+). The enzyme catalyses a long-chain fatty acid(in) + ATP + H2O = a long-chain fatty acid(out) + ADP + phosphate + H(+). The catalysed reaction is pristanoyl-CoA + H2O = 2,6,10,14-tetramethylpentadecanoate + CoA + H(+). It carries out the reaction 2,6,10,14-tetramethylpentadecanoate(in) + ATP + H2O = 2,6,10,14-tetramethylpentadecanoate(out) + ADP + phosphate + H(+). It catalyses the reaction hexadecanedioyl-CoA + H2O = hexadecanedioate + CoA + H(+). The enzyme catalyses hexadecanedioate(in) + ATP + H2O = hexadecanedioate(out) + ADP + phosphate + H(+). The catalysed reaction is (5Z,8Z,11Z,14Z,17Z)-eicosapentaenoyl-CoA + H2O = (5Z,8Z,11Z,14Z,17Z)-eicosapentaenoate + CoA + H(+). It carries out the reaction (5Z,8Z,11Z,14Z,17Z)-eicosapentaenoate(in) + ATP + H2O = (5Z,8Z,11Z,14Z,17Z)-eicosapentaenoate(out) + ADP + phosphate + H(+). It catalyses the reaction (4Z,7Z,10Z,13Z,16Z,19Z)-docosahexaenoyl-CoA + H2O = (4Z,7Z,10Z,13Z,16Z,19Z)-docosahexaenoate + CoA + H(+). The enzyme catalyses (4Z,7Z,10Z,13Z,16Z,19Z)-docosahexaenoate(in) + ATP + H2O = (4Z,7Z,10Z,13Z,16Z,19Z)-docosahexaenoate(out) + ADP + phosphate + H(+). Its function is as follows. Broad substrate specificity ATP-dependent transporter of the ATP-binding cassette (ABC) family that catalyzes the transport of long-chain fatty acids (LCFA)-CoA, dicarboxylic acids-CoA, long-branched-chain fatty acids-CoA and bile acids from the cytosol to the peroxisome lumen for beta-oxydation. Has fatty acyl-CoA thioesterase and ATPase activities. Probably hydrolyzes fatty acyl-CoAs into free fatty acids prior to their ATP-dependent transport into peroxisomes. Thus, play a role in regulation of LCFAs and energy metabolism namely, in the degradation and biosynthesis of fatty acids by beta-oxidation. In Rattus norvegicus (Rat), this protein is ATP-binding cassette sub-family D member 3 (Abcd3).